Consider the following 430-residue polypeptide: Tol-Pal system protein TolB (430 aa).

An N-terminal signal peptide occupies residues 1 to 21 (MKQAFRVALGFLILWASVLHA).

Belongs to the TolB family. As to quaternary structure, the Tol-Pal system is composed of five core proteins: the inner membrane proteins TolA, TolQ and TolR, the periplasmic protein TolB and the outer membrane protein Pal. They form a network linking the inner and outer membranes and the peptidoglycan layer.

The protein resides in the periplasm. In terms of biological role, part of the Tol-Pal system, which plays a role in outer membrane invagination during cell division and is important for maintaining outer membrane integrity. TolB occupies a key intermediary position in the Tol-Pal system because it communicates directly with both membrane-embedded components, Pal in the outer membrane and TolA in the inner membrane. In Serratia proteamaculans (strain 568), this protein is Tol-Pal system protein TolB.